Consider the following 547-residue polypeptide: Probable bifunctional tRNA threonylcarbamoyladenosine biosynthesis protein (547 aa).

The segment at 1 to 329 (MDTSKDLICI…YRSDMVEVNW (329 aa)) is kae1. Histidine 112, histidine 116, and tyrosine 133 together coordinate Fe cation. L-threonylcarbamoyladenylate contacts are provided by residues 133-137 (YVSGG), aspartate 165, glycine 178, glutamate 182, and asparagine 262. Aspartate 290 serves as a coordination point for Fe cation. Residues 346 to 547 (IIPEHLIGKG…KEVEKRARYL (202 aa)) enclose the Protein kinase domain. Residues 352-360 (IGKGAEADI) and lysine 373 contribute to the ATP site. Aspartate 465 serves as the catalytic Proton acceptor; for kinase activity.

In the N-terminal section; belongs to the KAE1 / TsaD family. It in the C-terminal section; belongs to the protein kinase superfamily. Tyr protein kinase family. BUD32 subfamily. In terms of assembly, component of the KEOPS complex that consists of Kae1, Bud32, Cgi121 and Pcc1; the whole complex dimerizes. The cofactor is Fe(2+).

It localises to the cytoplasm. It carries out the reaction L-seryl-[protein] + ATP = O-phospho-L-seryl-[protein] + ADP + H(+). The catalysed reaction is L-threonyl-[protein] + ATP = O-phospho-L-threonyl-[protein] + ADP + H(+). The enzyme catalyses L-threonylcarbamoyladenylate + adenosine(37) in tRNA = N(6)-L-threonylcarbamoyladenosine(37) in tRNA + AMP + H(+). Its function is as follows. Required for the formation of a threonylcarbamoyl group on adenosine at position 37 (t(6)A37) in tRNAs that read codons beginning with adenine. Is a component of the KEOPS complex that is probably involved in the transfer of the threonylcarbamoyl moiety of threonylcarbamoyl-AMP (TC-AMP) to the N6 group of A37. The Kae1 domain likely plays a direct catalytic role in this reaction. The Bud32 domain probably displays kinase activity that regulates Kae1 function. The protein is Probable bifunctional tRNA threonylcarbamoyladenosine biosynthesis protein of Methanococcus maripaludis (strain C7 / ATCC BAA-1331).